A 119-amino-acid chain; its full sequence is Ribonuclease P protein component (119 aa).

This sequence belongs to the RnpA family. In terms of assembly, consists of a catalytic RNA component (M1 or rnpB) and a protein subunit.

It carries out the reaction Endonucleolytic cleavage of RNA, removing 5'-extranucleotides from tRNA precursor.. In terms of biological role, RNaseP catalyzes the removal of the 5'-leader sequence from pre-tRNA to produce the mature 5'-terminus. It can also cleave other RNA substrates such as 4.5S RNA. The protein component plays an auxiliary but essential role in vivo by binding to the 5'-leader sequence and broadening the substrate specificity of the ribozyme. In Listeria innocua serovar 6a (strain ATCC BAA-680 / CLIP 11262), this protein is Ribonuclease P protein component.